The sequence spans 212 residues: MKNLERLFAEKLLKIKAIKLQPANPFTWASGWKSPFYCDNRKTLSYPSLRNFVKIEITRLILERFGQVDAIAGVATGAIPQGALVADALNLPFVYVRSTPKDHGLENLIEGELRPGMKVVVVEDLISTGGSSLKAVEAIRRDGCEVIGMVAAYTYGFPVAEEAFKNAKVPLVTLTNYEAVLDVALRTGYIEEEDIATLNDWRKDPAHWDAGK.

5-phospho-alpha-D-ribose 1-diphosphate contacts are provided by residues R97, K101, H103, and 123-131 (EDLISTGGS). S127 provides a ligand contact to orotate.

The protein belongs to the purine/pyrimidine phosphoribosyltransferase family. PyrE subfamily. As to quaternary structure, homodimer. It depends on Mg(2+) as a cofactor.

It carries out the reaction orotidine 5'-phosphate + diphosphate = orotate + 5-phospho-alpha-D-ribose 1-diphosphate. It participates in pyrimidine metabolism; UMP biosynthesis via de novo pathway; UMP from orotate: step 1/2. Functionally, catalyzes the transfer of a ribosyl phosphate group from 5-phosphoribose 1-diphosphate to orotate, leading to the formation of orotidine monophosphate (OMP). The polypeptide is Orotate phosphoribosyltransferase (Bacteroides thetaiotaomicron (strain ATCC 29148 / DSM 2079 / JCM 5827 / CCUG 10774 / NCTC 10582 / VPI-5482 / E50)).